The following is a 686-amino-acid chain: MLAVPEMGLQGLYIGSSPERSPVPSPPGSPRTQESCGIAPLTPSQSPKPEVRAPQQASFSVVVAIDFGTTSSGYAFSFASDPEAIHMMRKWEGGDPGVAHQKTPTCLLLTPEGAFHSFGYTARDYYHDLDPEEARDWLYFEKFKMKIHSATDLTLKTQLEAVNGKTMPALEVFAHALRFFREHALQELREQSPSLPEKDTVRWVLTVPAIWKQPAKQFMREAAYLAGLVSRENAEQLLIALEPEAASVYCRKLRLHQLLDLSGRAPGGGRLGERRSIDSSFRQAREQLRRSRHSRTFLVESGVGELWAEMQAGDRYVVADCGGGTVDLTVHQLEQPHGTLKELYKASGGPYGAVGVDLAFEQLLCRIFGEDFIATFKRQRPAAWVDLTIAFEARKRTAGPHRAGALNISLPFSFIDFYRKQRGHNVETALRRSSVNFVKWSSQGMLRMSCEAMNELFQPTVSGIIQHIEALLARPEVQGVKLLFLVGGFAESAVLQHAVQAALGARGLRVVVPHDVGLTILKGAVLFGQAPGVVRVRRSPLTYGVGVLNRFVPGRHPPEKLLVRDGRRWCTDVFERFVAAEQSVALGEEVRRSYCPARPGQRRVLINLYCCAAEDARFITDPGVRKCGALSLELEPADCGQDTAGAPPGRREIRAAMQFGDTEIKVTAVDVSTNRSVRASIDFLSN.

Residues leucine 12–alanine 53 are disordered. Residues serine 25 and serine 29 each carry the phosphoserine modification. Residue threonine 42 is modified to Phosphothreonine. A phosphoserine mark is found at serine 44, serine 46, and serine 276.

Belongs to the heat shock protein 70 family. In terms of tissue distribution, highest expression in muscle and heart. Lower levels in liver and kidney.

This chain is Heat shock 70 kDa protein 12B (HSPA12B), found in Homo sapiens (Human).